We begin with the raw amino-acid sequence, 175 residues long: Type-2 ice-structuring protein (175 aa).

The first 16 residues, 1-16, serve as a signal peptide directing secretion; sequence MLAALLVCAMVALTRA. Positions 17–33 are excised as a propeptide; the sequence is ANGDTGKEAVMTGSSGK. Residues 36 to 163 form the C-type lectin domain; that stretch reads TECPTDWKMF…LHASVCAKPA (128 aa). 5 disulfides stabilise this stretch: cysteine 38/cysteine 49, cysteine 66/cysteine 159, cysteine 103/cysteine 134, cysteine 123/cysteine 145, and cysteine 135/cysteine 151.

The protein localises to the secreted. Its function is as follows. Antifreeze proteins lower the blood freezing point. This is Type-2 ice-structuring protein from Osmerus mordax (Rainbow smelt).